The sequence spans 233 residues: MKIFAIQLQPLDDKNARKQIEQLKPFVSFEKRAAAERFRFLIDARRTLLGEVLIRHIIHEMYALPMEQIIFETEGNGKPVVRQIPSFHFNLSHSGDWVVGAVDDAPVGIDIEEIKPIDLAIAERFFSADEYQDLLSQPAERQEAYFFHLWSMKEAFIKLTGKGISYGLSSFTARLSEDGQATLRLPDHEAPCVVQTYSLDPAYQMAVCTRKPAAAEHVEILTCENMLSRLNNV.

3 residues coordinate Mg(2+): aspartate 110, glutamate 112, and glutamate 154. Residues 161–192 (GKGISYGLSSFTARLSEDGQATLRLPDHEAPC) are peptidyl carrier protein binding.

It belongs to the P-Pant transferase superfamily. Gsp/Sfp/HetI/AcpT family. Mg(2+) serves as cofactor.

The catalysed reaction is apo-[peptidyl-carrier protein] + CoA = holo-[peptidyl-carrier protein] + adenosine 3',5'-bisphosphate + H(+). Functionally, probably activates the peptidyl carrier protein (PCP) domains of surfactin synthetase by transferring the 4'-phosphopantetheinyl moiety of coenzyme A (CoA) to a serine residue. Required for the production of the lipopeptide antibiotic, surfactin. In Bacillus pumilus (Bacillus mesentericus), this protein is 4'-phosphopantetheinyl transferase psf-1 (psf-1).